The sequence spans 237 residues: Chloride intracellular channel protein 3 (237 aa).

The tract at residues 1–89 (MAETTKLQLF…EEFLEETLGP (89 aa)) is required for insertion into the membrane. Residues 13–91 (ASEDGESVGH…FLEETLGPPD (79 aa)) enclose the GST N-terminal domain. Positions 23 to 26 (CPSC) match the G-site motif. C23 and C26 are joined by a disulfide. Residues 25–45 (SCQRLFMVLLLKGVPFTLTTV) traverse the membrane as a helical segment. The 168-residue stretch at 69–236 (DGDVKTDTLQ…LAAYQPAVHP (168 aa)) folds into the GST C-terminal domain. S160 is modified (phosphoserine).

It belongs to the chloride channel CLIC family. Associated with the C-terminal of MAPK15.

It localises to the nucleus. It is found in the membrane. The protein localises to the cell membrane. Its subcellular location is the cytoplasm. The protein resides in the secreted. It localises to the extracellular space. It is found in the extracellular matrix. The enzyme catalyses chloride(in) = chloride(out). Functionally, in the soluble state, catalyzes glutaredoxin-like thiol disulfide exchange reactions with reduced glutathione as electron donor. Reduced in a glutathione-dependent way and secreted into the extracellular matrix where it activates TGM2 and promotes blood vessel growth during tissue remodeling as occurs in tumorigenesis. Can reduce specific cysteines in TGM2 and regulate cofactor binding. Can insert into membranes and form outwardly rectifying chloride ion channels. May participate in cellular growth control. This chain is Chloride intracellular channel protein 3, found in Mus musculus (Mouse).